A 350-amino-acid chain; its full sequence is Biotin synthase (350 aa).

The 219-residue stretch at 38–256 (NYVQVSTLLS…IAIARIMMPQ (219 aa)) folds into the Radical SAM core domain. [4Fe-4S] cluster contacts are provided by cysteine 53, cysteine 57, and cysteine 60. Positions 97, 128, 188, and 260 each coordinate [2Fe-2S] cluster.

It belongs to the radical SAM superfamily. Biotin synthase family. As to quaternary structure, homodimer. [4Fe-4S] cluster is required as a cofactor. [2Fe-2S] cluster serves as cofactor.

The catalysed reaction is (4R,5S)-dethiobiotin + (sulfur carrier)-SH + 2 reduced [2Fe-2S]-[ferredoxin] + 2 S-adenosyl-L-methionine = (sulfur carrier)-H + biotin + 2 5'-deoxyadenosine + 2 L-methionine + 2 oxidized [2Fe-2S]-[ferredoxin]. Its pathway is cofactor biosynthesis; biotin biosynthesis; biotin from 7,8-diaminononanoate: step 2/2. In terms of biological role, catalyzes the conversion of dethiobiotin (DTB) to biotin by the insertion of a sulfur atom into dethiobiotin via a radical-based mechanism. The chain is Biotin synthase from Vibrio campbellii (strain ATCC BAA-1116).